We begin with the raw amino-acid sequence, 76 residues long: Large ribosomal subunit protein bL28 (76 aa).

Positions arginine 21–glutamine 42 are disordered. Residues histidine 33–glutamine 42 show a composition bias toward basic residues.

This sequence belongs to the bacterial ribosomal protein bL28 family.

In Halothermothrix orenii (strain H 168 / OCM 544 / DSM 9562), this protein is Large ribosomal subunit protein bL28.